The primary structure comprises 635 residues: tRNA uridine 5-carboxymethylaminomethyl modification enzyme MnmG (635 aa).

15 to 20 (GAGHAG) contacts FAD. 276 to 290 (GPRYCPSIEDKIVRF) serves as a coordination point for NAD(+).

The protein belongs to the MnmG family. In terms of assembly, homodimer. Heterotetramer of two MnmE and two MnmG subunits. Requires FAD as cofactor.

Its subcellular location is the cytoplasm. Functionally, NAD-binding protein involved in the addition of a carboxymethylaminomethyl (cmnm) group at the wobble position (U34) of certain tRNAs, forming tRNA-cmnm(5)s(2)U34. The polypeptide is tRNA uridine 5-carboxymethylaminomethyl modification enzyme MnmG (Streptococcus sanguinis (strain SK36)).